The sequence spans 544 residues: Chaperonin GroEL 1 (544 aa).

Residues 29–32 (TLGP), 86–90 (DGTTT), Gly-413, and Asp-495 each bind ATP. Positions 525-544 (PEPKTNTPASSGSGMSDYDY) are disordered. A compositionally biased stretch (polar residues) spans 528–538 (KTNTPASSGSG).

The protein belongs to the chaperonin (HSP60) family. In terms of assembly, forms a cylinder of 14 subunits composed of two heptameric rings stacked back-to-back. Interacts with the co-chaperonin GroES.

Its subcellular location is the cytoplasm. It catalyses the reaction ATP + H2O + a folded polypeptide = ADP + phosphate + an unfolded polypeptide.. Functionally, together with its co-chaperonin GroES, plays an essential role in assisting protein folding. The GroEL-GroES system forms a nano-cage that allows encapsulation of the non-native substrate proteins and provides a physical environment optimized to promote and accelerate protein folding. This Synechococcus sp. (strain JA-2-3B'a(2-13)) (Cyanobacteria bacterium Yellowstone B-Prime) protein is Chaperonin GroEL 1.